The sequence spans 621 residues: MAU2 chromatid cohesion factor homolog (621 aa).

TPR repeat units follow at residues 96 to 129, 451 to 484, and 491 to 524; these read FDTASLLAQLHLQTEQSSHAKAMLRRAVELSQNN, GGFYYVQGLHAFHKNSFHEAKRFLRETLKMANAE, and SCSLVLLSHVFLSIGNSKESMNMVTPAMQLASKI.

It belongs to the SCC4/mau-2 family. In terms of assembly, interacts with Nipped-B to form the cohesin loading complex.

The protein resides in the nucleus. It is found in the nucleoplasm. Functionally, required for association of the cohesin complex with chromatin during interphase. Plays a role in sister chromatid cohesion and normal progression through prometaphase. This is MAU2 chromatid cohesion factor homolog from Drosophila virilis (Fruit fly).